A 167-amino-acid chain; its full sequence is Transcription initiation factor TFIID subunit 10 (167 aa).

Disordered regions lie at residues 1-56 (MASD…EESE) and 119-139 (TTNI…NPKD). The span at 41–56 (EQPDVEEVPLTTEESE) shows a compositional bias: acidic residues. Positions 130-139 (SSKDKKNPKD) are enriched in basic and acidic residues.

Belongs to the TAF10 family. In terms of assembly, belongs to the TFIID complex which is composed of TATA binding protein (Tbp) and a number of TBP-associated factors (TAFs). Also a member of the histone acetylase (HAT) complex. In terms of tissue distribution, at embryonic stage 9, highest expression is detected within the ectoderm, ventral chord, and anterior foregut primordium. Later in development preferential expression is in the foregut, proventriculus, and central nervous system. Coexpressed with Taf10b in the lateral epidermis and anal plate.

The protein resides in the cytoplasm. It is found in the nucleus. In terms of biological role, TFIID is a multimeric protein complex that plays a central role in mediating promoter responses to various activators and repressors. The protein is Transcription initiation factor TFIID subunit 10 of Drosophila melanogaster (Fruit fly).